We begin with the raw amino-acid sequence, 81 residues long: Sulfur carrier protein TusA (81 aa).

Catalysis depends on Cys19, which acts as the Cysteine persulfide intermediate.

It belongs to the sulfur carrier protein TusA family.

It is found in the cytoplasm. Sulfur carrier protein which probably makes part of a sulfur-relay system. In Shewanella baltica (strain OS223), this protein is Sulfur carrier protein TusA.